The primary structure comprises 125 residues: Large ribosomal subunit protein bL12 (125 aa).

Belongs to the bacterial ribosomal protein bL12 family. Homodimer. Part of the ribosomal stalk of the 50S ribosomal subunit. Forms a multimeric L10(L12)X complex, where L10 forms an elongated spine to which 2 to 4 L12 dimers bind in a sequential fashion. Binds GTP-bound translation factors.

Its function is as follows. Forms part of the ribosomal stalk which helps the ribosome interact with GTP-bound translation factors. Is thus essential for accurate translation. This Coprothermobacter proteolyticus (strain ATCC 35245 / DSM 5265 / OCM 4 / BT) protein is Large ribosomal subunit protein bL12.